A 405-amino-acid chain; its full sequence is Probable tRNA sulfurtransferase (405 aa).

A THUMP domain is found at 60–165 (TEVDKRLKKV…QDAVYISNQL (106 aa)). ATP contacts are provided by residues 183–184 (ML), 208–209 (HF), Arg-265, Gly-287, and Gln-296.

It belongs to the ThiI family.

It localises to the cytoplasm. It carries out the reaction [ThiI sulfur-carrier protein]-S-sulfanyl-L-cysteine + a uridine in tRNA + 2 reduced [2Fe-2S]-[ferredoxin] + ATP + H(+) = [ThiI sulfur-carrier protein]-L-cysteine + a 4-thiouridine in tRNA + 2 oxidized [2Fe-2S]-[ferredoxin] + AMP + diphosphate. The catalysed reaction is [ThiS sulfur-carrier protein]-C-terminal Gly-Gly-AMP + S-sulfanyl-L-cysteinyl-[cysteine desulfurase] + AH2 = [ThiS sulfur-carrier protein]-C-terminal-Gly-aminoethanethioate + L-cysteinyl-[cysteine desulfurase] + A + AMP + 2 H(+). The protein operates within cofactor biosynthesis; thiamine diphosphate biosynthesis. Its function is as follows. Catalyzes the ATP-dependent transfer of a sulfur to tRNA to produce 4-thiouridine in position 8 of tRNAs, which functions as a near-UV photosensor. Also catalyzes the transfer of sulfur to the sulfur carrier protein ThiS, forming ThiS-thiocarboxylate. This is a step in the synthesis of thiazole, in the thiamine biosynthesis pathway. The sulfur is donated as persulfide by IscS. The sequence is that of Probable tRNA sulfurtransferase from Lactobacillus acidophilus (strain ATCC 700396 / NCK56 / N2 / NCFM).